The chain runs to 341 residues: Elongation factor G (341 aa).

This sequence belongs to the GTP-binding elongation factor family. EF-G/EF-2 subfamily.

It is found in the cytoplasm. In terms of biological role, catalyzes the GTP-dependent ribosomal translocation step during translation elongation. During this step, the ribosome changes from the pre-translocational (PRE) to the post-translocational (POST) state as the newly formed A-site-bound peptidyl-tRNA and P-site-bound deacylated tRNA move to the P and E sites, respectively. Catalyzes the coordinated movement of the two tRNA molecules, the mRNA and conformational changes in the ribosome. The polypeptide is Elongation factor G (fus) (Streptomyces ramocissimus).